The chain runs to 420 residues: Pyrin and HIN domain-containing protein 1 (420 aa).

The Pyrin domain maps to 1-87 (MVNEYKRIVL…ANKLKNEKAK (87 aa)). Disordered stretches follow at residues 82 to 201 (KNEK…SSSA) and 216 to 236 (RLKN…GSKK). Basic residues predominate over residues 87-102 (KAKRTRTGKRKTAAKR). Polar residues-rich tracts occupy residues 108–118 (PSTSQPMSTTN) and 126–151 (GRST…AIQI). Over residues 152–169 (SPTIASSSGQTSSRSSET) the composition is skewed to low complexity. The span at 170–201 (LQSIIQSPKTPKRPSSSILDPPVSSGTASSSA) shows a compositional bias: polar residues. Residues 219–416 (NVPKEPSEEN…STTHSNMQVI (198 aa)) enclose the HIN-200 domain. The segment covering 220–229 (VPKEPSEENG) has biased composition (basic and acidic residues).

This sequence belongs to the HIN-200 family.

The protein resides in the nucleus. This Mus musculus (Mouse) protein is Pyrin and HIN domain-containing protein 1.